We begin with the raw amino-acid sequence, 148 residues long: Single-stranded DNA-binding protein 2 (148 aa).

An SSB domain is found at 4–109; the sequence is INSVIIAGNL…IKARRIQFLN (106 aa).

In terms of assembly, homotetramer.

This is Single-stranded DNA-binding protein 2 (ssb2) from Chlorobaculum tepidum (strain ATCC 49652 / DSM 12025 / NBRC 103806 / TLS) (Chlorobium tepidum).